We begin with the raw amino-acid sequence, 504 residues long: MKAAYTAYRCLTKDLEGCAMNPELTMESLGTLHGPAGGGSGGGGGGGGGGGGGGPGHEQELLASPSPHHAGRGAAGSLRGPPPPPTAHQELGTAAAAAAAASRSAMVTSMASILDGGDYRPELSIPLHHAMSMSCDSSPPGMGMSNTYTTLTPLQPLPPISTVSDKFHHPHPHHHPHHHHHHHHQRLSGNVSGSFTLMRDERGLPAMNNLYSPYKEMPGMSQSLSPLAATPLGNGLGGLHNAQQSLPNYGPPGHDKMLSPNFDAHHTAMLTRGEQHLSRGLGTPPAAMMSHLNGLHHPGHTQSHGPVLAPSRERPPSSSSGSQVATSGQLEEINTKEVAQRITAELKRYSIPQAIFAQRVLCRSQGTLSDLLRNPKPWSKLKSGRETFRRMWKWLQEPEFQRMSALRLAACKRKEQEPNKDRNNSQKKSRLVFTDLQRRTLFAIFKENKRPSKEMQITISQQLGLELTTVSNFFMNARRRSLEKWQDDLSTGGSSSTSSTCTKA.

4 disordered regions span residues 29-95 (LGTL…GTAA), 166-189 (KFHH…RLSG), 274-332 (EQHL…QLEE), and 485-504 (WQDD…CTKA). Residues 35–56 (PAGGGSGGGGGGGGGGGGGGPG) are compositionally biased toward gly residues. The segment covering 168-186 (HHPHPHHHPHHHHHHHHQR) has biased composition (basic residues). The CUT DNA-binding region spans 324–410 (VATSGQLEEI…QRMSALRLAA (87 aa)). Positions 426–485 (QKKSRLVFTDLQRRTLFAIFKENKRPSKEMQITISQQLGLELTTVSNFFMNARRRSLEKW) form a DNA-binding region, homeobox. The segment covering 490–504 (STGGSSSTSSTCTKA) has biased composition (low complexity).

Belongs to the CUT homeobox family.

Its subcellular location is the nucleus. Transcriptional activator. Activates the transcription of a number of liver genes such as HNF3B. In Homo sapiens (Human), this protein is One cut domain family member 2 (ONECUT2).